The following is a 351-amino-acid chain: Peptidyl-Lys metalloendopeptidase (351 aa).

Positions 1-22 (MFSLSSRFFLYSLCLSAVAVSA) are cleaved as a signal peptide. The propeptide occupies 23–183 (APGLSLSLSG…VARRSNLGKR (161 aa)). Intrachain disulfides connect Cys189–Cys259 and Cys261–Cys281. His301 provides a ligand contact to Zn(2+). The active site involves Glu302. Zn(2+) contacts are provided by His305 and Asp314.

Belongs to the peptidase M35 family. Requires Zn(2+) as cofactor.

The protein localises to the secreted. It carries out the reaction Preferential cleavage in proteins: -Xaa-|-Lys- (in which Xaa may be Pro).. Its activity is regulated as follows. Inhibited by chelating agents such as imidazole, alpha,alpha'-bipyridine, and 1,10-phenanthroline. The protein is Peptidyl-Lys metalloendopeptidase (MEP) of Armillaria mellea (Honey mushroom).